The sequence spans 1272 residues: Presporeless protein A (1272 aa).

The short motif at 146 to 161 (KDKRIKPIDPKKKISR) is the Nuclear localization signal element. 2 disordered regions span residues 369-403 (ASTI…DDTS) and 468-490 (STSS…NQLK). Positions 374–392 (DGEEEDDDDDDNDVDGNDD) are enriched in acidic residues. Residues 393–403 (DNNKEKVDDTS) are compositionally biased toward basic and acidic residues. The span at 468–487 (STSSTNTASSTRSKASSNSN) shows a compositional bias: low complexity.

The protein resides in the nucleus. Functionally, functions autonomously, very early in the prespore pathway, to control prespore cell differentiation, maybe at the level of transcription. Also required for proper aggregation. In Dictyostelium discoideum (Social amoeba), this protein is Presporeless protein A (pslA).